Reading from the N-terminus, the 140-residue chain is Ribosome-binding factor A (140 aa).

The segment covering 1–13 (MQKKSSSKSHRAT) has biased composition (basic residues). The tract at residues 1-22 (MQKKSSSKSHRATRGPSQRQLR) is disordered.

The protein belongs to the RbfA family. As to quaternary structure, monomer. Binds 30S ribosomal subunits, but not 50S ribosomal subunits or 70S ribosomes.

It is found in the cytoplasm. One of several proteins that assist in the late maturation steps of the functional core of the 30S ribosomal subunit. Associates with free 30S ribosomal subunits (but not with 30S subunits that are part of 70S ribosomes or polysomes). Required for efficient processing of 16S rRNA. May interact with the 5'-terminal helix region of 16S rRNA. In Parvibaculum lavamentivorans (strain DS-1 / DSM 13023 / NCIMB 13966), this protein is Ribosome-binding factor A.